Consider the following 421-residue polypeptide: NADH-quinone oxidoreductase subunit F (421 aa).

NAD(+) is bound at residue 54 to 63 (GRGGAGFSTG). 166–213 (GAGAYICGEETALLESLEGKKGMPRLKPPFPAGFGLYGCPTTINNVES) contacts FMN. Cysteine 344, cysteine 347, cysteine 350, and cysteine 390 together coordinate [4Fe-4S] cluster.

The protein belongs to the complex I 51 kDa subunit family. The cofactor is FMN. [4Fe-4S] cluster is required as a cofactor.

The enzyme catalyses a quinone + NADH + 5 H(+)(in) = a quinol + NAD(+) + 4 H(+)(out). NDH-1 shuttles electrons from NADH, via FMN and iron-sulfur (Fe-S) centers, to quinones in the respiratory chain. Couples the redox reaction to proton translocation (for every two electrons transferred, four hydrogen ions are translocated across the cytoplasmic membrane), and thus conserves the redox energy in a proton gradient. The protein is NADH-quinone oxidoreductase subunit F (nuoF) of Rickettsia conorii (strain ATCC VR-613 / Malish 7).